Here is a 553-residue protein sequence, read N- to C-terminus: Dihydroxy-acid dehydratase (553 aa).

D78 contacts Mg(2+). Position 119 (C119) interacts with [2Fe-2S] cluster. Mg(2+)-binding residues include D120 and K121. K121 bears the N6-carboxylysine mark. A [2Fe-2S] cluster-binding site is contributed by C193. Residue E441 participates in Mg(2+) binding. S467 (proton acceptor) is an active-site residue.

The protein belongs to the IlvD/Edd family. Homodimer. It depends on [2Fe-2S] cluster as a cofactor. The cofactor is Mg(2+).

It catalyses the reaction (2R)-2,3-dihydroxy-3-methylbutanoate = 3-methyl-2-oxobutanoate + H2O. The catalysed reaction is (2R,3R)-2,3-dihydroxy-3-methylpentanoate = (S)-3-methyl-2-oxopentanoate + H2O. The protein operates within amino-acid biosynthesis; L-isoleucine biosynthesis; L-isoleucine from 2-oxobutanoate: step 3/4. It participates in amino-acid biosynthesis; L-valine biosynthesis; L-valine from pyruvate: step 3/4. Functionally, functions in the biosynthesis of branched-chain amino acids. Catalyzes the dehydration of (2R,3R)-2,3-dihydroxy-3-methylpentanoate (2,3-dihydroxy-3-methylvalerate) into 2-oxo-3-methylpentanoate (2-oxo-3-methylvalerate) and of (2R)-2,3-dihydroxy-3-methylbutanoate (2,3-dihydroxyisovalerate) into 2-oxo-3-methylbutanoate (2-oxoisovalerate), the penultimate precursor to L-isoleucine and L-valine, respectively. In Geobacter sulfurreducens (strain ATCC 51573 / DSM 12127 / PCA), this protein is Dihydroxy-acid dehydratase.